Here is a 370-residue protein sequence, read N- to C-terminus: Spermidine/putrescine import ATP-binding protein PotA (370 aa).

An ABC transporter domain is found at 6–236 (IELHQVTKRY…PINHFVADFI (231 aa)). 38–45 (GPSGCGKT) provides a ligand contact to ATP.

This sequence belongs to the ABC transporter superfamily. Spermidine/putrescine importer (TC 3.A.1.11.1) family. The complex is composed of two ATP-binding proteins (PotA), two transmembrane proteins (PotB and PotC) and a solute-binding protein (PotD).

The protein resides in the cell membrane. The enzyme catalyses ATP + H2O + polyamine-[polyamine-binding protein]Side 1 = ADP + phosphate + polyamineSide 2 + [polyamine-binding protein]Side 1.. Functionally, part of the ABC transporter complex PotABCD involved in spermidine/putrescine import. Responsible for energy coupling to the transport system. The sequence is that of Spermidine/putrescine import ATP-binding protein PotA from Levilactobacillus brevis (strain ATCC 367 / BCRC 12310 / CIP 105137 / JCM 1170 / LMG 11437 / NCIMB 947 / NCTC 947) (Lactobacillus brevis).